The sequence spans 60 residues: Regulatory protein DegR (60 aa).

Its function is as follows. Stabilizes the phosphorylated form of DegU, leading to enhanced production of levansucrase, alkaline protease, and neutral protease. The sequence is that of Regulatory protein DegR (degR) from Bacillus subtilis subsp. natto.